The primary structure comprises 479 residues: Aspartyl/glutamyl-tRNA(Asn/Gln) amidotransferase subunit B (479 aa).

Belongs to the GatB/GatE family. GatB subfamily. In terms of assembly, heterotrimer of A, B and C subunits.

It carries out the reaction L-glutamyl-tRNA(Gln) + L-glutamine + ATP + H2O = L-glutaminyl-tRNA(Gln) + L-glutamate + ADP + phosphate + H(+). The catalysed reaction is L-aspartyl-tRNA(Asn) + L-glutamine + ATP + H2O = L-asparaginyl-tRNA(Asn) + L-glutamate + ADP + phosphate + 2 H(+). Functionally, allows the formation of correctly charged Asn-tRNA(Asn) or Gln-tRNA(Gln) through the transamidation of misacylated Asp-tRNA(Asn) or Glu-tRNA(Gln) in organisms which lack either or both of asparaginyl-tRNA or glutaminyl-tRNA synthetases. The reaction takes place in the presence of glutamine and ATP through an activated phospho-Asp-tRNA(Asn) or phospho-Glu-tRNA(Gln). In Streptococcus pyogenes serotype M49 (strain NZ131), this protein is Aspartyl/glutamyl-tRNA(Asn/Gln) amidotransferase subunit B.